We begin with the raw amino-acid sequence, 492 residues long: KAT8 regulatory NSL complex subunit 2 (492 aa).

Residue Lys78 forms a Glycyl lysine isopeptide (Lys-Gly) (interchain with G-Cter in SUMO2) linkage. A disordered region spans residues 126–182 (ELGSQTPESSRSEASRILDEDSWSDGEQEPITVDQTWRGDPDSEADSIDSDQEDPLK). Thr131 carries the post-translational modification Phosphothreonine. Residues 135 to 144 (SRSEASRILD) are compositionally biased toward basic and acidic residues. Residues Ser147, Ser149, Ser168, Ser172, and Ser175 each carry the phosphoserine modification. Residues 167–178 (DSEADSIDSDQE) are compositionally biased toward acidic residues. The tract at residues 308–364 (DVRCSNQSLPMTRHCLTHICQDTNQVLFKCCQGSEEVPCNKPVPVSLSEDPCCPLHF) is required for interaction with other NSL complex members. Residues 455-492 (AGDGCRSQGSRNSEKASAPLSQSGLATANGKPEPTSIS) are disordered.

Component of the NSL complex at least composed of KAT8/MOF, KANSL1, KANSL2, KANSL3, MCRS1, PHF20, OGT1/OGT, WDR5 and HCFC1.

The protein localises to the nucleus. It is found in the mitochondrion. Non-catalytic component of the NSL histone acetyltransferase complex, a multiprotein complex that mediates histone H4 acetylation at 'Lys-5'- and 'Lys-8' (H4K5ac and H4K8ac) at transcription start sites and promotes transcription initiation. Required for NSL complex stability and for transcription of intraciliary transport genes in both ciliated and non-ciliated cells by regulating histone H4 acetylation at 'Lys-5'- and 'Lys-12' (H4K5ac and H4K12ac). This is necessary for cilium assembly in ciliated cells and for organization of the microtubule cytoskeleton in non-ciliated cells. Required within the NSL complex to maintain nuclear architecture stability by promoting KAT8-mediated acetylation of lamin LMNA. The protein is KAT8 regulatory NSL complex subunit 2 (KANSL2) of Homo sapiens (Human).